A 288-amino-acid chain; its full sequence is Formamidopyrimidine-DNA glycosylase (288 aa).

P2 acts as the Schiff-base intermediate with DNA in catalysis. The active-site Proton donor is E3. The active-site Proton donor; for beta-elimination activity is K58. DNA is bound by residues H101, R124, and R169. The segment at 254–288 (LVYDRAGLPCRVCGTPIRQIVQGQRSTFYCPACQR) adopts an FPG-type zinc-finger fold. R278 serves as the catalytic Proton donor; for delta-elimination activity.

This sequence belongs to the FPG family. In terms of assembly, monomer. Requires Zn(2+) as cofactor.

It carries out the reaction Hydrolysis of DNA containing ring-opened 7-methylguanine residues, releasing 2,6-diamino-4-hydroxy-5-(N-methyl)formamidopyrimidine.. The catalysed reaction is 2'-deoxyribonucleotide-(2'-deoxyribose 5'-phosphate)-2'-deoxyribonucleotide-DNA = a 3'-end 2'-deoxyribonucleotide-(2,3-dehydro-2,3-deoxyribose 5'-phosphate)-DNA + a 5'-end 5'-phospho-2'-deoxyribonucleoside-DNA + H(+). Involved in base excision repair of DNA damaged by oxidation or by mutagenic agents. Acts as a DNA glycosylase that recognizes and removes damaged bases. Has a preference for oxidized purines, such as 7,8-dihydro-8-oxoguanine (8-oxoG). Has AP (apurinic/apyrimidinic) lyase activity and introduces nicks in the DNA strand. Cleaves the DNA backbone by beta-delta elimination to generate a single-strand break at the site of the removed base with both 3'- and 5'-phosphates. This is Formamidopyrimidine-DNA glycosylase from Ralstonia nicotianae (strain ATCC BAA-1114 / GMI1000) (Ralstonia solanacearum).